The sequence spans 429 residues: Ribosomal RNA small subunit methyltransferase B (429 aa).

S-adenosyl-L-methionine contacts are provided by residues 254–260 (CAAPGGK), aspartate 277, aspartate 303, and aspartate 322. Cysteine 375 functions as the Nucleophile in the catalytic mechanism.

Belongs to the class I-like SAM-binding methyltransferase superfamily. RsmB/NOP family.

It is found in the cytoplasm. It catalyses the reaction cytidine(967) in 16S rRNA + S-adenosyl-L-methionine = 5-methylcytidine(967) in 16S rRNA + S-adenosyl-L-homocysteine + H(+). Functionally, specifically methylates the cytosine at position 967 (m5C967) of 16S rRNA. The polypeptide is Ribosomal RNA small subunit methyltransferase B (Escherichia coli O17:K52:H18 (strain UMN026 / ExPEC)).